The following is a 267-amino-acid chain: MSENRITQLVKQDKKFLIAYYMPEFPVTGSTLPVLEALEESGVDIIELGMPYSDPIGDGPVIQDAAHTAIRNGVTIKYLLELVRRARQGEGCKKITAPILLMGYCNPLIAYGGDCFLHDALEAGVDGLLIPDLPPEEAADFLEKAKGFGLTVVFLVSPVTPPERIELIDSLSTDFSYCLAVNGTTGTAKLSDTATESAVDDYLKRVRQHARKKFVVGFGIKDKAQVEHMWNFADGAVVGSALLQYIAASATPEETARLAAEFWKTLR.

Active-site proton acceptor residues include E47 and D58.

This sequence belongs to the TrpA family. As to quaternary structure, tetramer of two alpha and two beta chains.

It carries out the reaction (1S,2R)-1-C-(indol-3-yl)glycerol 3-phosphate + L-serine = D-glyceraldehyde 3-phosphate + L-tryptophan + H2O. Its pathway is amino-acid biosynthesis; L-tryptophan biosynthesis; L-tryptophan from chorismate: step 5/5. In terms of biological role, the alpha subunit is responsible for the aldol cleavage of indoleglycerol phosphate to indole and glyceraldehyde 3-phosphate. The chain is Tryptophan synthase alpha chain from Pelodictyon phaeoclathratiforme (strain DSM 5477 / BU-1).